A 302-amino-acid chain; its full sequence is Large ribosomal subunit protein uL29m (302 aa).

Belongs to the universal ribosomal protein uL29 family. As to quaternary structure, component of the mitochondrial large ribosomal subunit. Mature mitochondrial ribosomes consist of a small (37S) and a large (54S) subunit. The 37S subunit contains at least 33 different proteins and 1 molecule of RNA (15S). The 54S subunit contains at least 45 different proteins and 1 molecule of RNA (21S).

It is found in the mitochondrion. In Debaryomyces hansenii (strain ATCC 36239 / CBS 767 / BCRC 21394 / JCM 1990 / NBRC 0083 / IGC 2968) (Yeast), this protein is Large ribosomal subunit protein uL29m (MRPL4).